A 409-amino-acid polypeptide reads, in one-letter code: MNKPKKVAILTAGGLAPCLNSAIGSLIERYTEIDPSIEIICYRGGYKGLLLGDSYPVTAEVRKKAGVLQRFGGSVIGNSRVKLTNVKDCVKRGLVKEGEDPQKVAADQLVKDGVDILHTIGGDDTNTAAADLAAFLARNNYGLTVIGLPKTVDNDVFPIKQSLGAWTAAEQGARYFMNVVAENNANPRMLIVHEVMGRNCGWLTAATAQEYRKLLDRAEWLPELGLTRESYEVHAVFVPEMAIDLEAEAKRLREVMDKVDCVNIFVSEGAGVEAIVAEMQAKGQEVPRDAFGHIKLDAVNPGKWFGEQFAQMIGAEKTLVQKSGYFARASASNVDDMRLIKSCADLAVECAFRRESGVIGHDEDNGNVLRAIEFPRIKGGKPFNIDTDWFNSMLSEIGQPKGGKVEVSH.

Diphosphate is bound at residue glycine 14. Aspartate 123 serves as a coordination point for Mg(2+). Substrate-binding positions include 151 to 153 (TVD), 196 to 198 (MGR), glutamate 268, and 325 to 328 (YFAR). The Proton acceptor role is filled by aspartate 153.

Belongs to the phosphofructokinase type A (PFKA) family. PPi-dependent PFK group II subfamily. Clade 'P' sub-subfamily. As to quaternary structure, homodimer. The cofactor is Mg(2+).

The protein localises to the cytoplasm. It catalyses the reaction beta-D-fructose 6-phosphate + diphosphate = beta-D-fructose 1,6-bisphosphate + phosphate + H(+). The protein operates within carbohydrate degradation; glycolysis; D-glyceraldehyde 3-phosphate and glycerone phosphate from D-glucose: step 3/4. Non-allosteric. Catalyzes the phosphorylation of D-fructose 6-phosphate, the first committing step of glycolysis. Uses inorganic phosphate (PPi) as phosphoryl donor instead of ATP like common ATP-dependent phosphofructokinases (ATP-PFKs), which renders the reaction reversible, and can thus function both in glycolysis and gluconeogenesis. Consistently, PPi-PFK can replace the enzymes of both the forward (ATP-PFK) and reverse (fructose-bisphosphatase (FBPase)) reactions. This is Pyrophosphate--fructose 6-phosphate 1-phosphotransferase from Methylomonas methanica.